Consider the following 229-residue polypeptide: Putative N-acetylmannosamine-6-phosphate 2-epimerase 2 (229 aa).

The protein belongs to the NanE family.

The enzyme catalyses an N-acyl-D-glucosamine 6-phosphate = an N-acyl-D-mannosamine 6-phosphate. The protein operates within amino-sugar metabolism; N-acetylneuraminate degradation; D-fructose 6-phosphate from N-acetylneuraminate: step 3/5. Functionally, converts N-acetylmannosamine-6-phosphate (ManNAc-6-P) to N-acetylglucosamine-6-phosphate (GlcNAc-6-P). The chain is Putative N-acetylmannosamine-6-phosphate 2-epimerase 2 (nanE2) from Salmonella typhimurium (strain LT2 / SGSC1412 / ATCC 700720).